The sequence spans 502 residues: Maturase K (502 aa).

Belongs to the intron maturase 2 family. MatK subfamily.

The protein resides in the plastid. The protein localises to the chloroplast. Usually encoded in the trnK tRNA gene intron. Probably assists in splicing its own and other chloroplast group II introns. The sequence is that of Maturase K from Vitis vinifera (Grape).